We begin with the raw amino-acid sequence, 257 residues long: MPDMQKRPDHRRIPISKVGVKDISYPIVVMDKNRSLQHTVARVNMYVDLPHQFKGTHMSRFVEILNRHREQIALDKLETILEEMKARLGSASAHLEIQFPYFIDKRAPVSGARSLMEYSCEFSASLTDTLDFVLGVRVPLTSLCPCSRELAIHGAHNQRSIMTVRVRYRDFIWIEDLVELIEQCGSSPLYSLLKRVDEKYVTEQAYENPRFVEDMVREAYSRLAGMENITWFSVETENFESIHNHSAYAAVELDRRG.

It belongs to the GTP cyclohydrolase IV family.

The enzyme catalyses GTP + H2O = 7,8-dihydroneopterin 3'-triphosphate + formate + H(+). The protein operates within cofactor biosynthesis; 7,8-dihydroneopterin triphosphate biosynthesis; 7,8-dihydroneopterin triphosphate from GTP: step 1/1. Functionally, converts GTP to 7,8-dihydroneopterin triphosphate. In Pelobacter propionicus (strain DSM 2379 / NBRC 103807 / OttBd1), this protein is GTP cyclohydrolase FolE2.